The sequence spans 232 residues: Phosphoadenosine 5'-phosphosulfate reductase (232 aa).

The Nucleophile; cysteine thiosulfonate intermediate role is filled by Cys-228.

This sequence belongs to the PAPS reductase family. CysH subfamily.

It is found in the cytoplasm. It catalyses the reaction [thioredoxin]-disulfide + sulfite + adenosine 3',5'-bisphosphate + 2 H(+) = [thioredoxin]-dithiol + 3'-phosphoadenylyl sulfate. The protein operates within sulfur metabolism; hydrogen sulfide biosynthesis; sulfite from sulfate: step 3/3. Functionally, catalyzes the formation of sulfite from phosphoadenosine 5'-phosphosulfate (PAPS) using thioredoxin as an electron donor. This Synechococcus sp. (strain ATCC 27144 / PCC 6301 / SAUG 1402/1) (Anacystis nidulans) protein is Phosphoadenosine 5'-phosphosulfate reductase.